Reading from the N-terminus, the 574-residue chain is Sulfate adenylyltransferase (574 aa).

An N-terminal region spans residues 1–169; that stretch reads MANSPHGGVL…IEAVNKLNHY (169 aa). A catalytic region spans residues 170–394; sequence DYVALRYSPA…LRESSPPRAT (225 aa). Gln197 contacts sulfate. ATP is bound by residues 197-200 and 291-294; these read QTRN and GRDH. Catalysis depends on residues Thr198, Arg199, and Asn200. Arg199 contacts sulfate. Ala295 is a sulfate binding site. Val333 contacts ATP. The interval 395 to 574 is allosteric regulation domain; adenylyl-sulfate kinase-like; sequence QGFTIFLTGY…LESEGYFDRL (180 aa). Residues 434 to 437, Arg451, 477 to 478, and Arg516 contribute to the 3'-phosphoadenylyl sulfate site; these read DTVR and IA.

It in the N-terminal section; belongs to the sulfate adenylyltransferase family. The protein in the C-terminal section; belongs to the APS kinase family. As to quaternary structure, homohexamer. Dimer of trimers.

The protein localises to the cytoplasm. The catalysed reaction is sulfate + ATP + H(+) = adenosine 5'-phosphosulfate + diphosphate. The protein operates within sulfur metabolism; hydrogen sulfide biosynthesis; sulfite from sulfate: step 1/3. Its activity is regulated as follows. Allosterically inhibited by 3'-phosphoadenosine 5'-phosphosulfate (PAPS). In terms of biological role, catalyzes the first intracellular reaction of sulfate assimilation, forming adenosine-5'-phosphosulfate (APS) from inorganic sulfate and ATP. Plays an important role in sulfate activation as a component of the biosynthesis pathway of sulfur-containing amino acids. This chain is Sulfate adenylyltransferase, found in Aspergillus terreus (strain NIH 2624 / FGSC A1156).